The chain runs to 245 residues: Probable phosphatase KPN78578_10290 (245 aa).

The Zn(2+) site is built by histidine 7, histidine 9, histidine 15, histidine 40, glutamate 73, histidine 101, histidine 131, aspartate 192, and histidine 194.

This sequence belongs to the PHP family. In terms of assembly, homotrimer. It depends on Zn(2+) as a cofactor.

In Klebsiella pneumoniae subsp. pneumoniae (strain ATCC 700721 / MGH 78578), this protein is Probable phosphatase KPN78578_10290.